A 166-amino-acid polypeptide reads, in one-letter code: Small ribosomal subunit protein uS5 (166 aa).

Residues 11 to 74 (LQEKLIAVNR…EKARRNMMNV (64 aa)) enclose the S5 DRBM domain.

This sequence belongs to the universal ribosomal protein uS5 family. As to quaternary structure, part of the 30S ribosomal subunit. Contacts proteins S4 and S8.

Functionally, with S4 and S12 plays an important role in translational accuracy. Located at the back of the 30S subunit body where it stabilizes the conformation of the head with respect to the body. In Buchnera aphidicola subsp. Acyrthosiphon kondoi (Acyrthosiphon kondoi symbiotic bacterium), this protein is Small ribosomal subunit protein uS5.